The chain runs to 150 residues: MRCVVYSIAKSSPLELVKIYQKQCRQFDCELELVDLFPKNTANAQKISKEFAQKSYSLAFEPYLNPKAKNIALHPKAQRGDSFAFSKMLENHLNINFFIAGAYGFEENFLKGCQAWSLSEMTFSHEVAKIVLCEQIYRALSIIFKHPYHK.

Residues Ala-100 and 118-123 (LSEMTF) contribute to the S-adenosyl-L-methionine site.

It belongs to the RNA methyltransferase RlmH family. Homodimer.

It is found in the cytoplasm. It catalyses the reaction pseudouridine(1915) in 23S rRNA + S-adenosyl-L-methionine = N(3)-methylpseudouridine(1915) in 23S rRNA + S-adenosyl-L-homocysteine + H(+). Specifically methylates the pseudouridine at position 1915 (m3Psi1915) in 23S rRNA. The sequence is that of Ribosomal RNA large subunit methyltransferase H from Helicobacter pylori (strain HPAG1).